Reading from the N-terminus, the 196-residue chain is Zinc metalloproteinase-disintegrin-like bothrojarin-3 (196 aa).

The region spanning proline 2–asparagine 88 is the Disintegrin domain. Residues valine 4, leucine 9, glutamate 11, glutamate 14, and aspartate 17 each contribute to the Ca(2+) site. Intrachain disulfides connect cysteine 5–cysteine 34, cysteine 16–cysteine 29, cysteine 18–cysteine 24, cysteine 28–cysteine 51, cysteine 42–cysteine 48, cysteine 47–cysteine 73, cysteine 60–cysteine 80, cysteine 67–cysteine 99, cysteine 92–cysteine 104, cysteine 111–cysteine 161, cysteine 126–cysteine 168, cysteine 139–cysteine 149, and cysteine 156–cysteine 193. Residues glutamate 66 to aspartate 68 carry the D/ECD-tripeptide motif.

It belongs to the venom metalloproteinase (M12B) family. P-III subfamily. P-IIIa sub-subfamily. Monomer. It depends on Zn(2+) as a cofactor. In terms of processing, glycosylated. As to expression, expressed by the venom gland.

It is found in the secreted. In terms of biological role, the hemorrhagic metalloproteinase-disintegrin-like bothrojarin-1 is a potent inhibitor of collagen-induced platelet aggregation by blockage of alpha-2/beta-1 (ITGA2/ITGB1) integrin. It does not present any fibrinogen-clotting activity. This is Zinc metalloproteinase-disintegrin-like bothrojarin-3 from Bothrops jararaca (Jararaca).